The following is a 383-amino-acid chain: 1-deoxy-D-xylulose 5-phosphate reductoisomerase (383 aa).

Residues Thr-10, Gly-11, Ser-12, Ile-13, Gly-36, Lys-37, Asn-38, and Asn-122 each contribute to the NADPH site. Lys-123 is a binding site for 1-deoxy-D-xylulose 5-phosphate. Glu-124 contributes to the NADPH binding site. Residue Asp-148 coordinates Mn(2+). The 1-deoxy-D-xylulose 5-phosphate site is built by Ser-149, Glu-150, Ser-174, and His-197. Glu-150 is a binding site for Mn(2+). An NADPH-binding site is contributed by Gly-203. 4 residues coordinate 1-deoxy-D-xylulose 5-phosphate: Ser-210, Asn-215, Lys-216, and Glu-219. A Mn(2+)-binding site is contributed by Glu-219.

Belongs to the DXR family. Requires Mg(2+) as cofactor. The cofactor is Mn(2+).

It catalyses the reaction 2-C-methyl-D-erythritol 4-phosphate + NADP(+) = 1-deoxy-D-xylulose 5-phosphate + NADPH + H(+). It participates in isoprenoid biosynthesis; isopentenyl diphosphate biosynthesis via DXP pathway; isopentenyl diphosphate from 1-deoxy-D-xylulose 5-phosphate: step 1/6. Catalyzes the NADPH-dependent rearrangement and reduction of 1-deoxy-D-xylulose-5-phosphate (DXP) to 2-C-methyl-D-erythritol 4-phosphate (MEP). This Bacillus velezensis (strain DSM 23117 / BGSC 10A6 / LMG 26770 / FZB42) (Bacillus amyloliquefaciens subsp. plantarum) protein is 1-deoxy-D-xylulose 5-phosphate reductoisomerase.